We begin with the raw amino-acid sequence, 256 residues long: Transcription factor CAULIFLOWER (256 aa).

Residues 1–61 (MGRGRVQLKR…GKLFEYTSES (61 aa)) enclose the MADS-box domain. One can recognise a K-box domain in the interval 90 to 180 (QPNWSMEYSR…TKQIKERENI (91 aa)).

Homodimer capable of binding to CArG-box sequences.

The protein resides in the nucleus. In terms of biological role, probable transcription factor that promotes early floral meristem identity in synergy with APETALA1, FRUITFULL and LEAFY. Is required subsequently for the transition of an inflorescence meristem into a floral meristem. Seems to be partially redundant to the function of APETALA1. The polypeptide is Transcription factor CAULIFLOWER (CAL) (Arabidopsis lyrata subsp. lyrata (Lyre-leaved rock-cress)).